The chain runs to 66 residues: Transmembrane protein B66L (66 aa).

The signal sequence occupies residues methionine 1–alanine 20. Residues phenylalanine 21–tyrosine 40 lie on the Extracellular side of the membrane. Residues phenylalanine 41–isoleucine 61 traverse the membrane as a helical segment. Over asparagine 62 to leucine 66 the chain is Cytoplasmic.

This sequence belongs to the asfivirus B66L family.

The protein localises to the host membrane. The protein is Transmembrane protein B66L of Ornithodoros (relapsing fever ticks).